A 192-amino-acid chain; its full sequence is Lipid A acyltransferase PagP (192 aa).

An N-terminal signal peptide occupies residues 1-26 (MTVVNKSFLTFLVFFCQILFPLNASA). Residues histidine 64, aspartate 107, and serine 108 contribute to the active site.

The protein belongs to the lipid A palmitoyltransferase family. In terms of assembly, homodimer.

It localises to the cell outer membrane. The catalysed reaction is a lipid A + a 1,2-diacyl-sn-glycero-3-phosphocholine = a hepta-acyl lipid A + a 2-acyl-sn-glycero-3-phosphocholine. It carries out the reaction a lipid IVA + a 1,2-diacyl-sn-glycero-3-phosphocholine = a lipid IVB + a 2-acyl-sn-glycero-3-phosphocholine. The enzyme catalyses a lipid IIA + a 1,2-diacyl-sn-glycero-3-phosphocholine = a lipid IIB + a 2-acyl-sn-glycero-3-phosphocholine. Its function is as follows. Transfers a fatty acid residue from the sn-1 position of a phospholipid to the N-linked hydroxyfatty acid chain on the proximal unit of lipid A or its precursors. The sequence is that of Lipid A acyltransferase PagP from Cronobacter turicensis (strain DSM 18703 / CCUG 55852 / LMG 23827 / z3032).